The chain runs to 709 residues: DNA topoisomerase 1 (709 aa).

Residues 3-127 (KNLVVIESPN…KCKRITFNEI (125 aa)) form the Toprim domain. Mg(2+) is bound by residues glutamate 9 and aspartate 95. Residues 143 to 598 (DLNWVESQFA…FWTNFKSDVK (456 aa)) form the Topo IA-type catalytic domain. The interval 176-181 (SAGRVQ) is interaction with DNA. The active-site O-(5'-phospho-DNA)-tyrosine intermediate is tyrosine 334. 2 consecutive C4-type zinc fingers follow at residues 618 to 646 (CPKC…FPKC) and 667 to 696 (CPEC…FPNC).

The protein belongs to the type IA topoisomerase family. Monomer. Mg(2+) serves as cofactor.

The enzyme catalyses ATP-independent breakage of single-stranded DNA, followed by passage and rejoining.. Releases the supercoiling and torsional tension of DNA, which is introduced during the DNA replication and transcription, by transiently cleaving and rejoining one strand of the DNA duplex. Introduces a single-strand break via transesterification at a target site in duplex DNA. The scissile phosphodiester is attacked by the catalytic tyrosine of the enzyme, resulting in the formation of a DNA-(5'-phosphotyrosyl)-enzyme intermediate and the expulsion of a 3'-OH DNA strand. The free DNA strand then undergoes passage around the unbroken strand, thus removing DNA supercoils. Finally, in the religation step, the DNA 3'-OH attacks the covalent intermediate to expel the active-site tyrosine and restore the DNA phosphodiester backbone. This chain is DNA topoisomerase 1, found in Mycoplasma genitalium (strain ATCC 33530 / DSM 19775 / NCTC 10195 / G37) (Mycoplasmoides genitalium).